Reading from the N-terminus, the 984-residue chain is Putative formate dehydrogenase SAR2393 (984 aa).

Residues Glu-3–Asp-79 form the 2Fe-2S ferredoxin-type domain. Residues Cys-37, Cys-48, Cys-51, and Cys-63 each coordinate [2Fe-2S] cluster. Residues Asp-79–Gly-119 form the 4Fe-4S His(Cys)3-ligated-type domain. Residues His-95, Cys-99, Cys-102, Cys-109, Cys-147, Cys-150, Cys-153, Cys-157, Cys-190, Cys-193, Cys-196, Cys-200, Cys-264, Cys-267, Cys-271, and Cys-299 each coordinate [4Fe-4S] cluster. 4Fe-4S ferredoxin-type domains lie at Pro-138–Thr-165 and Asn-181–Glu-211. The interval Met-252 to Lys-984 is formate dehydrogenase. The 4Fe-4S Mo/W bis-MGD-type domain maps to Ile-257 to Gln-313.

This sequence in the C-terminal section; belongs to the prokaryotic molybdopterin-containing oxidoreductase family. It depends on [2Fe-2S] cluster as a cofactor. The cofactor is [4Fe-4S] cluster. Mo-bis(molybdopterin guanine dinucleotide) serves as cofactor.

It carries out the reaction formate + NAD(+) = CO2 + NADH. The chain is Putative formate dehydrogenase SAR2393 from Staphylococcus aureus (strain MRSA252).